The sequence spans 195 residues: Flagellar transcriptional regulator FlhC (195 aa).

Residues cysteine 137, cysteine 140, cysteine 157, and cysteine 160 each coordinate Zn(2+). Residues 165 to 195 (RAGSARRKTTTRKAVAPTHKTTAASRKAVVA) are disordered.

The protein belongs to the FlhC family. As to quaternary structure, heterohexamer composed of two FlhC and four FlhD subunits. Each FlhC binds a FlhD dimer, forming a heterotrimer, and a hexamer assembles by dimerization of two heterotrimers. The cofactor is Zn(2+).

It localises to the cytoplasm. Functions in complex with FlhD as a master transcriptional regulator that regulates transcription of several flagellar and non-flagellar operons by binding to their promoter region. Activates expression of class 2 flagellar genes, including fliA, which is a flagellum-specific sigma factor that turns on the class 3 genes. Also regulates genes whose products function in a variety of physiological pathways. The chain is Flagellar transcriptional regulator FlhC from Thauera aminoaromatica.